Here is a 472-residue protein sequence, read N- to C-terminus: Pentatricopeptide repeat-containing protein At5g46100 (472 aa).

PPR repeat units follow at residues 50–84 (DQSS…NCVV), 85–119 (SEDI…DCDP), 120–154 (SQKA…GLPP), 155–190 (TVAS…GCDP), 191–225 (DSYT…DCAP), 226–260 (TVVT…GIEP), 261–295 (NVFT…GCRP), 296–330 (NMVT…GLKP), 331–365 (DAGL…GITP), 373–406 (HVKT…GISV), and 407–441 (EVET…GCIP).

The protein belongs to the PPR family. P subfamily.

The sequence is that of Pentatricopeptide repeat-containing protein At5g46100 from Arabidopsis thaliana (Mouse-ear cress).